A 221-amino-acid polypeptide reads, in one-letter code: Small ribosomal subunit protein uS5 (221 aa).

An S5 DRBM domain is found at 46-109 (LKDEVINIER…DNAKLNIIEI (64 aa)).

The protein belongs to the universal ribosomal protein uS5 family. As to quaternary structure, part of the 30S ribosomal subunit. Contacts protein S4.

In terms of biological role, with S4 and S12 plays an important role in translational accuracy. This Picrophilus torridus (strain ATCC 700027 / DSM 9790 / JCM 10055 / NBRC 100828 / KAW 2/3) protein is Small ribosomal subunit protein uS5.